We begin with the raw amino-acid sequence, 232 residues long: Orotidine 5'-phosphate decarboxylase (232 aa).

Residues D16, K38, 65–74 (DLKLHDIGNT), T119, R180, Q189, G209, and R210 each bind substrate. The Proton donor role is filled by K67.

The protein belongs to the OMP decarboxylase family. Type 1 subfamily. Homodimer.

It catalyses the reaction orotidine 5'-phosphate + H(+) = UMP + CO2. Its pathway is pyrimidine metabolism; UMP biosynthesis via de novo pathway; UMP from orotate: step 2/2. Its function is as follows. Catalyzes the decarboxylation of orotidine 5'-monophosphate (OMP) to uridine 5'-monophosphate (UMP). This Methylorubrum populi (strain ATCC BAA-705 / NCIMB 13946 / BJ001) (Methylobacterium populi) protein is Orotidine 5'-phosphate decarboxylase.